The primary structure comprises 423 residues: Putative competence-damage inducible protein (423 aa).

Belongs to the CinA family.

This is Putative competence-damage inducible protein from Streptococcus pyogenes serotype M6 (strain ATCC BAA-946 / MGAS10394).